We begin with the raw amino-acid sequence, 354 residues long: Small ribosomal subunit protein uS2 (354 aa).

It belongs to the universal ribosomal protein uS2 family.

The polypeptide is Small ribosomal subunit protein uS2 (Methylorubrum populi (strain ATCC BAA-705 / NCIMB 13946 / BJ001) (Methylobacterium populi)).